The sequence spans 784 residues: LPS-assembly protein LptD (784 aa).

Residues 1–24 form the signal peptide; it reads MKKRIPTLLATMIASALYSHQGLA. Intrachain disulfides connect Cys31-Cys724 and Cys173-Cys725.

Belongs to the LptD family. Component of the lipopolysaccharide transport and assembly complex. Interacts with LptE and LptA. Post-translationally, contains two intramolecular disulfide bonds.

The protein localises to the cell outer membrane. Its function is as follows. Together with LptE, is involved in the assembly of lipopolysaccharide (LPS) at the surface of the outer membrane. The sequence is that of LPS-assembly protein LptD from Salmonella paratyphi A (strain ATCC 9150 / SARB42).